The chain runs to 378 residues: Chaperone protein DnaJ (378 aa).

In terms of domain architecture, J spans 4–68; that stretch reads DFYEILGVSR…ETRARYDRFG (65 aa). Residues 136 to 218 form a CR-type zinc finger; sequence GGEKEIRIPH…CGGAGRKQET (83 aa). Zn(2+) is bound by residues Cys149, Cys152, Cys166, Cys169, Cys192, Cys195, Cys206, and Cys209. 4 CXXCXGXG motif repeats span residues 149-156, 166-173, 192-199, and 206-213; these read CKTCSGSG, CGTCNGTG, CPTCNGEG, and CESCGGAG.

Belongs to the DnaJ family. Homodimer. Zn(2+) serves as cofactor.

It localises to the cytoplasm. Its function is as follows. Participates actively in the response to hyperosmotic and heat shock by preventing the aggregation of stress-denatured proteins and by disaggregating proteins, also in an autonomous, DnaK-independent fashion. Unfolded proteins bind initially to DnaJ; upon interaction with the DnaJ-bound protein, DnaK hydrolyzes its bound ATP, resulting in the formation of a stable complex. GrpE releases ADP from DnaK; ATP binding to DnaK triggers the release of the substrate protein, thus completing the reaction cycle. Several rounds of ATP-dependent interactions between DnaJ, DnaK and GrpE are required for fully efficient folding. Also involved, together with DnaK and GrpE, in the DNA replication of plasmids through activation of initiation proteins. The chain is Chaperone protein DnaJ from Picosynechococcus sp. (strain ATCC 27264 / PCC 7002 / PR-6) (Agmenellum quadruplicatum).